The chain runs to 918 residues: Glutamate receptor ionotropic, kainate 1 (918 aa).

Residues 1 to 30 (MEHGTLLAQPGLWTRDTSWALLYFLCYILP) form the signal peptide. At 31–576 (QTAPQVLRIG…VFSFLNPLSP (546 aa)) the chain is on the extracellular side. Residues Asn-68, Asn-74, Asn-276, Asn-379, Asn-428, Asn-439, and Asn-446 are each glycosylated (N-linked (GlcNAc...) asparagine). 3 residues coordinate L-glutamate: Pro-531, Thr-533, and Arg-538. N-linked (GlcNAc...) asparagine glycosylation is present at Asn-561. A helical membrane pass occupies residues 577–597 (DIWMYVLLACLGVSCVLFVIA). The Cytoplasmic segment spans residues 598 to 653 (RFTPYEWYNPHPCNPDSDVVENNFTLLNSFWFGVGALMQQGSELMPKALSTRIVGG). Residues 654–674 (IWWFFTLIIISSYTANLAAFL) traverse the membrane as a helical segment. Residues 675 to 834 (TVERMESPID…KEASALGVEN (160 aa)) are Extracellular-facing. The L-glutamate site is built by Ser-704 and Thr-705. The residue at position 725 (Ser-725) is a Phosphoserine; by PKC. Glu-753 is a binding site for L-glutamate. The residue at position 761 (Thr-761) is a Phosphothreonine; by PKC. An intrachain disulfide couples Cys-765 to Cys-819. A glycan (N-linked (GlcNAc...) asparagine) is linked at Asn-766. A helical transmembrane segment spans residues 835–855 (IGGIFIVLAAGLVLSVFVAIG). At 856–918 (EFIYKSRKNN…IRKQSSVHTV (63 aa)) the chain is on the cytoplasmic side.

Belongs to the glutamate-gated ion channel (TC 1.A.10.1) family. GRIK1 subfamily. In terms of assembly, homotetramer or heterotetramer of pore-forming glutamate receptor subunits. Tetramers may be formed by the dimerization of dimers. Can form functional heteromeric receptors with GRIK5. Can form functional heteromeric receptors with GRIK4. Interacts with KLHL17.

It localises to the cell membrane. Its subcellular location is the postsynaptic cell membrane. The catalysed reaction is Ca(2+)(in) = Ca(2+)(out). Ionotropic glutamate receptor that functions as a cation-permeable ligand-gated ion channel, gated by L-glutamate and the glutamatergic agonist kainic acid. L-glutamate acts as an excitatory neurotransmitter at many synapses in the central nervous system. Binding of the excitatory neurotransmitter L-glutamate induces a conformation change, leading to the opening of the cation channel, and thereby converts the chemical signal to an electrical impulse. The receptor then desensitizes rapidly and enters a transient inactive state, characterized by the presence of bound agonist. Functionally, ionotropic glutamate receptor that functions as a cation-permeable ligand-gated ion channel, gated by L-glutamate and the glutamatergic agonist kainic acid. This is Glutamate receptor ionotropic, kainate 1 (GRIK1) from Homo sapiens (Human).